The sequence spans 119 residues: Large ribosomal subunit protein bL20 (119 aa).

This sequence belongs to the bacterial ribosomal protein bL20 family.

In terms of biological role, binds directly to 23S ribosomal RNA and is necessary for the in vitro assembly process of the 50S ribosomal subunit. It is not involved in the protein synthesizing functions of that subunit. This chain is Large ribosomal subunit protein bL20, found in Jannaschia sp. (strain CCS1).